Here is a 256-residue protein sequence, read N- to C-terminus: MGRGRVQLKRIENKINRQVTFSKRRAGLLKKAHEISVLCDAEVALVVFSHKGKLFEYSTDSCMEKILERYERYSYAERQLIAPESDVNTNWSMEYNRLKAKIELLERNQRHYLGEDLNAMSPKELQNLEQQLDTALKHIRTRKNQLMYESINELQRKEKAIQEQNSMLSKQIKEREKILRAQQEQWDQQNHGHNMPPPPPPQQHQIQHPYMLSHQPSPFLNMGGLYQEEDPMAMRRNELELTLEPVYNCNLGCFAA.

An MADS-box domain is found at Met1–Ser61. The 91-residue stretch at Asn88 to Ile178 folds into the K-box domain. Residues Glu184–Ile206 are disordered.

As to quaternary structure, homodimer capable of binding to CArG-box sequences.

The protein resides in the nucleus. Its function is as follows. Transcription factor that promotes early floral meristem identity in synergy with LEAFY. Displays a redundant function with CAULIFLOWER in the up-regulation of LEAFY. Required subsequently for the transition of an inflorescence meristem into a floral meristem, and for the normal development of sepals and petals in flowers. Regulates positively B class homeotic proteins. This is Floral homeotic protein APETALA 1 (AP1) from Arabidopsis lyrata subsp. lyrata (Lyre-leaved rock-cress).